A 376-amino-acid chain; its full sequence is Respiration factor 1 (376 aa).

4 disordered regions span residues 1–23 (MKDLNPEMGKFATTKGPPQDNRG), 88–107 (VNVTHDESLPLGTIESNSTK), 258–279 (FKEKKKKKKGDVNGNHPETGSS), and 347–376 (GVNELEHNSSNLNNSNSGTPHNHNQNQHTN). Over residues 354 to 376 (NSSNLNNSNSGTPHNHNQNQHTN) the composition is skewed to low complexity.

It is found in the cytoplasm. Its subcellular location is the nucleus. It localises to the mitochondrion. Mitochondrial and nuclear transcriptional activator required for respiratory growth. This is Respiration factor 1 (RSF1) from Saccharomyces cerevisiae (strain YJM789) (Baker's yeast).